The primary structure comprises 208 residues: Large ribosomal subunit protein bL25 (208 aa).

The protein belongs to the bacterial ribosomal protein bL25 family. CTC subfamily. Part of the 50S ribosomal subunit; part of the 5S rRNA/L5/L18/L25 subcomplex. Contacts the 5S rRNA. Binds to the 5S rRNA independently of L5 and L18.

This is one of the proteins that binds to the 5S RNA in the ribosome where it forms part of the central protuberance. This chain is Large ribosomal subunit protein bL25, found in Bartonella quintana (strain Toulouse) (Rochalimaea quintana).